The primary structure comprises 296 residues: Glycine--tRNA ligase alpha subunit (296 aa).

Belongs to the class-II aminoacyl-tRNA synthetase family. Tetramer of two alpha and two beta subunits.

Its subcellular location is the cytoplasm. It catalyses the reaction tRNA(Gly) + glycine + ATP = glycyl-tRNA(Gly) + AMP + diphosphate. In Prochlorococcus marinus (strain SARG / CCMP1375 / SS120), this protein is Glycine--tRNA ligase alpha subunit.